The chain runs to 153 residues: ORM1-like protein 3 (153 aa).

The interval 1–17 is important for ceramide level-sensing; the sequence is MNVGTAHSEVNPNTRVM. The Cytoplasmic segment spans residues 1-21; that stretch reads MNVGTAHSEVNPNTRVMNSRG. The next 2 helical transmembrane spans lie at 22 to 44 and 45 to 63; these read IWLSYVLAIGLLHIVLLSIPFVS and VPVVWTLTNLIHNMGMYIF. Over 64–100 the chain is Cytoplasmic; the sequence is LHTVKGTPFETPDQGKARLLTHWEQMDYGVQFTASRK. The chain crosses the membrane as a helical span at residues 101 to 117; sequence FLTITPIVLYFLTSFYT. Residues 118-121 are Lumenal-facing; sequence KYDQ. Residues 122–139 form a helical membrane-spanning segment; sequence IHFVLNTVSLMSVLIPKL. At P137 the chain carries Hydroxyproline. Residues 140 to 153 lie on the Cytoplasmic side of the membrane; sequence PQLHGVRIFGINKY.

The protein belongs to the ORM family. As to quaternary structure, ceramide-sensitive subunit of the serine palmitoyltransferase (SPT) complex, which is also composed of SPTLC1, SPTLC2/3 and SPTSSA/B. Post-translationally, when hydroxylated at Pro-137, ubiquitinated via 'Lys-48'-linkage, leading to proteasomal degradation. In endothelial cells, ORMDL3 proteasomal degradation is controlled by the sphingosine 1-phosphate receptor signaling pathway. As to expression, widely expressed. Expressed in adult and fetal heart, brain, lung, liver, skeletal muscle and kidney. Expressed in adult pancreas and placenta and in fetal spleen and thymus.

The protein localises to the endoplasmic reticulum membrane. Its function is as follows. Plays an essential role in the homeostatic regulation of sphingolipid de novo biosynthesis by modulating the activity of the serine palmitoyltransferase (SPT) in response to ceramide levels. When complexed to SPT, the binding of ceramides to its N-terminus stabilizes a conformation that block SPT substrate entry, hence preventing SPT catalytic activity. Through this mechanism, maintains ceramide levels at sufficient concentrations for the production of complex sphingolipids, but which prevents the accumulation of ceramides to levels that trigger apoptosis. The sequence is that of ORM1-like protein 3 (ORMDL3) from Homo sapiens (Human).